Reading from the N-terminus, the 214-residue chain is MEGNSVVTPEIERLIQAVETADSAAKLVGAVRALAATRSPLAVPQLTTVLRYNNPGAAVAAVDGLIQIGDAAMTHLLANMDGYNYGARAWATRACAGIGDPRALALLQEAALTDFALSVRRAAAKGLGFLRWQSLPQEEQETVQKAIYDTLIQVCEDPEWVVRYGAIAGLENLAKQAQHYRQPLKDFLQSFVEQEPEAIVGERILWTLENIGPI.

The protein belongs to the CpcE/RpcE/PecE family. In terms of assembly, cpcE and CpcF associate to form a lyase.

Its function is as follows. Required for the chromophorylation of the cpcA gene product. This Synechocystis sp. (strain ATCC 27184 / PCC 6803 / Kazusa) protein is Phycocyanin alpha phycocyanobilin lyase CpcF (cpcF).